The chain runs to 509 residues: Zinc finger CCCH-type with G patch domain-containing protein (509 aa).

Positions 41 to 61 are disordered; that stretch reads TRGSEPEATSDTKTPETSDNI. Residues 47 to 58 show a composition bias toward polar residues; sequence EATSDTKTPETS. The C3H1-type zinc-finger motif lies at 155–178; the sequence is PCNYFLEGECRFDEVRCRYSHGAL. Positions 254–278 are disordered; that stretch reads DDDLTSESEESNETDGSDAGNDSDM. In terms of domain architecture, G-patch spans 310–356; it reads TRGIGSKLMANMGYIHGTGLGSDGRGIVTPVSAQILPQGRSLDACME. The interval 410–433 is disordered; that stretch reads GSQQTENANKKTKPNNLQQHSNKT. The span at 423 to 433 shows a compositional bias: polar residues; that stretch reads PNNLQQHSNKT.

Its subcellular location is the nucleus. Transcription repressor. This is Zinc finger CCCH-type with G patch domain-containing protein from Drosophila mojavensis (Fruit fly).